The chain runs to 214 residues: Probable transaldolase (214 aa).

Lysine 83 serves as the catalytic Schiff-base intermediate with substrate.

Belongs to the transaldolase family. Type 3B subfamily.

The protein localises to the cytoplasm. It carries out the reaction D-sedoheptulose 7-phosphate + D-glyceraldehyde 3-phosphate = D-erythrose 4-phosphate + beta-D-fructose 6-phosphate. It participates in carbohydrate degradation; pentose phosphate pathway; D-glyceraldehyde 3-phosphate and beta-D-fructose 6-phosphate from D-ribose 5-phosphate and D-xylulose 5-phosphate (non-oxidative stage): step 2/3. Its function is as follows. Transaldolase is important for the balance of metabolites in the pentose-phosphate pathway. The polypeptide is Probable transaldolase (Leptospira biflexa serovar Patoc (strain Patoc 1 / Ames)).